The following is a 282-amino-acid chain: Putative 4-diphosphocytidyl-2-C-methyl-D-erythritol kinase (282 aa).

Lysine 9 is a catalytic residue. ATP is bound at residue proline 93–threonine 103. Residue aspartate 135 is part of the active site.

Belongs to the GHMP kinase family. IspE subfamily.

It carries out the reaction 4-CDP-2-C-methyl-D-erythritol + ATP = 4-CDP-2-C-methyl-D-erythritol 2-phosphate + ADP + H(+). Its function is as follows. Catalyzes the phosphorylation of the position 2 hydroxy group of 4-diphosphocytidyl-2C-methyl-D-erythritol. This Staphylococcus saprophyticus subsp. saprophyticus (strain ATCC 15305 / DSM 20229 / NCIMB 8711 / NCTC 7292 / S-41) protein is Putative 4-diphosphocytidyl-2-C-methyl-D-erythritol kinase.